A 194-amino-acid chain; its full sequence is MPRLILASTSPWRRALLEKLTIPFECAAPDVDETPMPGEAPRQLVLRLAQAKAQSLAARFPNHLIIGSDQICVLDGEITGKPLTEEKARQQLAKASGNIVTFYTGLALYNSASGQLQTEVEPFDVHFRHLSEAEIDDYVRKEHPLHCAGSFKSEGLGIALFERLEGRDPNTLIGLPLIALCQMLRREGFNPLQQ.

D69 acts as the Proton acceptor in catalysis.

Belongs to the Maf family. YceF subfamily. The cofactor is a divalent metal cation.

The protein resides in the cytoplasm. It catalyses the reaction N(7)-methyl-GTP + H2O = N(7)-methyl-GMP + diphosphate + H(+). In terms of biological role, nucleoside triphosphate pyrophosphatase that hydrolyzes 7-methyl-GTP (m(7)GTP). May have a dual role in cell division arrest and in preventing the incorporation of modified nucleotides into cellular nucleic acids. This Salmonella choleraesuis (strain SC-B67) protein is 7-methyl-GTP pyrophosphatase (yceF1).